The following is a 265-amino-acid chain: Arginine and glutamate-rich protein 1 (265 aa).

Basic residues predominate over residues 1-54 (MGRSRSRSSSRSKHAKSGKHNKKRSRSREKERVRKRSKSRESKRNRRRESRSRS). A necessary and sufficient for RNA binding region spans residues 1-66 (MGRSRSRSSS…NTASRRERER (66 aa)). Positions 1 to 106 (MGRSRSRSSS…EKKAEYERQR (106 aa)) are disordered. 2 stretches are compositionally biased toward basic and acidic residues: residues 60 to 76 (SRRERERAASPPDRIDI) and 85 to 106 (SSLDEKQKREDEEKKAEYERQR). Residues 67-265 (AASPPDRIDI…KLSFSLKSPD (199 aa)) are necessary and sufficient for transcriptional regulation. The LXXLL motif 1; degenerate signature appears at 164 to 168 (LLEEL). An LXXLL motif 2; degenerate motif is present at residues 193 to 197 (LERIL). A compositionally biased stretch (basic and acidic residues) spans 229 to 245 (RMKLEQERQRQQKEEQK). Residues 229-265 (RMKLEQERQRQQKEEQKIILGKGKSRPKLSFSLKSPD) form a disordered region.

Belongs to the ARGLU1 family.

The protein resides in the nucleus. It is found in the nucleus speckle. It localises to the chromosome. Dual function regulator of gene expression; regulator of transcription and modulator of alternative splicing. General coactivator of nuclear receptor-induced gene expression. The polypeptide is Arginine and glutamate-rich protein 1 (arglu1) (Xenopus tropicalis (Western clawed frog)).